A 1052-amino-acid polypeptide reads, in one-letter code: Error-prone DNA polymerase (1052 aa).

The protein belongs to the DNA polymerase type-C family. DnaE2 subfamily.

It is found in the cytoplasm. It catalyses the reaction DNA(n) + a 2'-deoxyribonucleoside 5'-triphosphate = DNA(n+1) + diphosphate. In terms of biological role, DNA polymerase involved in damage-induced mutagenesis and translesion synthesis (TLS). It is not the major replicative DNA polymerase. This chain is Error-prone DNA polymerase, found in Bordetella bronchiseptica (strain ATCC BAA-588 / NCTC 13252 / RB50) (Alcaligenes bronchisepticus).